Reading from the N-terminus, the 535-residue chain is Probable deoxycholate-binding periplasmic protein YgiS (535 aa).

The signal sequence occupies residues 1–20 (MYTRNLLWLVSLVSAAPLYA).

Belongs to the bacterial solute-binding protein 5 family.

It is found in the periplasm. In terms of biological role, probably part of a deoxycholate transport system. Its expression in the presence of deoxycholate in a ygiS deletion mutant increases intracellular deoxycholate levels and decreases cell growth; higher expression in the presence of deoxycholate inhibits cell growth completely. Bile acid detergents such as deoxycholate are important for host defense against bacterial growth in the gall bladder and duodenum. This Escherichia coli (strain K12) protein is Probable deoxycholate-binding periplasmic protein YgiS (ygiS).